The primary structure comprises 427 residues: Phosphatidylglycerol--prolipoprotein diacylglyceryl transferase (427 aa).

Transmembrane regions (helical) follow at residues 21–41 (VPIR…LLIG), 53–73 (GVIY…GRLY), 96–116 (IWDG…GAWI), and 122–142 (GIPL…AQAI). R144 serves as a coordination point for a 1,2-diacyl-sn-glycero-3-phospho-(1'-sn-glycerol). The next 2 helical transmembrane spans lie at 189-209 (VALV…LIFV) and 256-276 (INSF…MAAP). Residues 280 to 427 (EDPESLRGNQ…ARLRERLSGR (148 aa)) form a disordered region. Residues 299–330 (EPATVAATTEAATEGVAAPADGAEAAGADATA) show a composition bias toward low complexity. The span at 332-346 (RPEESAEPDVEKPES) shows a compositional bias: basic and acidic residues. Positions 347–404 (EETEAAEEASEPEAEEPEAPEAEEPEEPETEEPEADSGEEPEEESGEAPEQLVAEEPE) are enriched in acidic residues. A compositionally biased stretch (basic and acidic residues) spans 411–427 (ETKRRWGARLRERLSGR).

This sequence belongs to the Lgt family.

It is found in the cell membrane. The enzyme catalyses L-cysteinyl-[prolipoprotein] + a 1,2-diacyl-sn-glycero-3-phospho-(1'-sn-glycerol) = an S-1,2-diacyl-sn-glyceryl-L-cysteinyl-[prolipoprotein] + sn-glycerol 1-phosphate + H(+). The protein operates within protein modification; lipoprotein biosynthesis (diacylglyceryl transfer). Functionally, catalyzes the transfer of the diacylglyceryl group from phosphatidylglycerol to the sulfhydryl group of the N-terminal cysteine of a prolipoprotein, the first step in the formation of mature lipoproteins. This is Phosphatidylglycerol--prolipoprotein diacylglyceryl transferase from Mycolicibacterium paratuberculosis (strain ATCC BAA-968 / K-10) (Mycobacterium paratuberculosis).